The following is a 314-amino-acid chain: Tetraacyldisaccharide 4'-kinase (314 aa).

Residue 61-68 participates in ATP binding; the sequence is IVGGSGKT.

It belongs to the LpxK family.

The enzyme catalyses a lipid A disaccharide + ATP = a lipid IVA + ADP + H(+). Its pathway is glycolipid biosynthesis; lipid IV(A) biosynthesis; lipid IV(A) from (3R)-3-hydroxytetradecanoyl-[acyl-carrier-protein] and UDP-N-acetyl-alpha-D-glucosamine: step 6/6. Its function is as follows. Transfers the gamma-phosphate of ATP to the 4'-position of a tetraacyldisaccharide 1-phosphate intermediate (termed DS-1-P) to form tetraacyldisaccharide 1,4'-bis-phosphate (lipid IVA). The sequence is that of Tetraacyldisaccharide 4'-kinase from Aliarcobacter butzleri (strain RM4018) (Arcobacter butzleri).